Consider the following 204-residue polypeptide: MSGKKKESGKFRSVLLIIILPLMFLLIAGGIVLWAAGINVLKPIQDAAAKTPVLKELVPETENKKGAASSKDSSNTAALEKTIKDQKSEISILNKDLETSKSEIDRLNQKIRSLEKTAEDQKKSSEDHTEGSADSKASSENDKVISVYKSMDSGKAAKIIAQLKEQEALKILNGLSKKQLADILAKMTPEQAATYTEKIAASQE.

Residues 115–140 form a disordered region; that stretch reads EKTAEDQKKSSEDHTEGSADSKASSE.

This chain is FlaA locus 22.9 kDa protein (ylxF), found in Bacillus subtilis (strain 168).